Consider the following 306-residue polypeptide: Small ribosomal subunit protein uS2 (306 aa).

S2 is subject to N-acetylserine. Laminin-binding stretches follow at residues 161–180 (IPCNNKGAHSVGLMWWMLAR) and 205–229 (RDPEEIEKEEQAAAEKATTKEEYQG). [DE]-W-[ST] repeat units lie at residues 230 to 232 (EWT), 245 to 247 (DWS), 276 to 278 (DWS), 286 to 288 (DWS), and 304 to 306 (EWS). The tract at residues 242–306 (EVADWSEGVQ…EWTGTTTEWS (65 aa)) is laminin-binding. The tract at residues 261–306 (PAERPEIPAAKPAAEDWSSQPASTDDWSAAPTAQASEWTGTTTEWS) is disordered. Residues 277-306 (WSSQPASTDDWSAAPTAQASEWTGTTTEWS) are compositionally biased toward polar residues.

Belongs to the universal ribosomal protein uS2 family. Monomer (37LRP) and homodimer (67LR). Component of the small ribosomal subunit. Mature ribosomes consist of a small (40S) and a large (60S) subunit. The 40S subunit contains about 33 different proteins and 1 molecule of RNA (18S). The 60S subunit contains about 49 different proteins and 3 molecules of RNA (28S, 5.8S and 5S). Interacts with rps21. Interacts with several laminins including at least lamb1. Interacts with mdk. In terms of processing, acylated. Acylation may be a prerequisite for conversion of the monomeric 37 kDa laminin receptor precursor (37LRP) to the mature dimeric 67 kDa laminin receptor (67LR), and may provide a mechanism for membrane association. Cleaved by stromelysin-3 (ST3) at the cell surface. Cleavage by stromelysin-3 may be a mechanism to alter cell-extracellular matrix interactions.

The protein localises to the cell membrane. The protein resides in the cytoplasm. It is found in the nucleus. Its function is as follows. Required for the assembly and/or stability of the 40S ribosomal subunit. Required for the processing of the 20S rRNA-precursor to mature 18S rRNA in a late step of the maturation of 40S ribosomal subunits. Also functions as a cell surface receptor for laminin. Plays a role in cell adhesion to the basement membrane and in the consequent activation of signaling transduction pathways. May play a role in cell fate determination and tissue morphogenesis. In Xenopus tropicalis (Western clawed frog), this protein is Small ribosomal subunit protein uS2 (rpsa).